The following is a 466-amino-acid chain: Amidase (466 aa).

Active-site charge relay system residues include Lys-79 and Ser-148. The tract at residues 128–152 (YGRITPKSRNPRDPGRTPGGSSGGS) is disordered. Residue Ser-172 is the Acyl-ester intermediate of the active site.

The protein belongs to the amidase family.

The enzyme catalyses a monocarboxylic acid amide + H2O = a monocarboxylate + NH4(+). This is Amidase from Pseudomonas putida (Arthrobacter siderocapsulatus).